The chain runs to 468 residues: Protein C-ets-2 (468 aa).

Residues 85–170 (ATFSGFQKEQ…EHLEQMIKEN (86 aa)) form the PNT domain. Phosphoserine occurs at positions 220 and 225. The tract at residues 262–290 (VNLLNNNSGKPKDHDSPENGGDSFESSDS) is disordered. A phosphoserine mark is found at serine 294, serine 297, and serine 300. The segment at residues 362–442 (IQLWQFLLEL…SGKRYVYRFV (81 aa)) is a DNA-binding region (ETS).

It belongs to the ETS family. In terms of processing, phosphorylation by CDK10 at Ser-220 and Ser-225 creates a phosphodegron that targets ETS2 for proteasomal degradation.

The protein localises to the nucleus. In terms of biological role, transcription factor activating transcription. Binds specifically the GGA DNA motif in gene promoters and stimulates transcription of those genes. This Mus musculus (Mouse) protein is Protein C-ets-2 (Ets2).